We begin with the raw amino-acid sequence, 376 residues long: Putative clathrin assembly protein At1g25240 (376 aa).

The region spanning 25 to 156 (KTSFRNPDLD…FFLSDQIRRR (132 aa)) is the ENTH domain.

It is found in the membrane. It localises to the clathrin-coated pit. Its subcellular location is the golgi apparatus. The protein localises to the cytoplasmic vesicle. The protein resides in the clathrin-coated vesicle. This Arabidopsis thaliana (Mouse-ear cress) protein is Putative clathrin assembly protein At1g25240.